Consider the following 445-residue polypeptide: Glutamate--tRNA ligase 2 (445 aa).

Positions Pro10 to Asn20 match the 'HIGH' region motif. The short motif at Lys240 to Arg244 is the 'KMSKS' region element. Lys243 lines the ATP pocket.

It belongs to the class-I aminoacyl-tRNA synthetase family. Glutamate--tRNA ligase type 1 subfamily. As to quaternary structure, monomer.

It localises to the cytoplasm. The enzyme catalyses tRNA(Glu) + L-glutamate + ATP = L-glutamyl-tRNA(Glu) + AMP + diphosphate. Functionally, catalyzes the attachment of glutamate to tRNA(Glu) in a two-step reaction: glutamate is first activated by ATP to form Glu-AMP and then transferred to the acceptor end of tRNA(Glu). The chain is Glutamate--tRNA ligase 2 from Rickettsia canadensis (strain McKiel).